A 332-amino-acid chain; its full sequence is 2,3-diketo-L-gulonate reductase (332 aa).

Catalysis depends on H44, which acts as the Proton donor. NAD(+)-binding positions include 168–174 (ITMVDMS), 224–225 (WK), and 304–306 (GHE).

The protein belongs to the LDH2/MDH2 oxidoreductase family. DlgD subfamily. Homodimer.

The protein resides in the cytoplasm. The catalysed reaction is 3-dehydro-L-gulonate + NAD(+) = 2,3-dioxo-L-gulonate + NADH + H(+). The enzyme catalyses 3-dehydro-L-gulonate + NADP(+) = 2,3-dioxo-L-gulonate + NADPH + H(+). Catalyzes the reduction of 2,3-diketo-L-gulonate in the presence of NADH, to form 3-keto-L-gulonate. In Klebsiella pneumoniae (strain 342), this protein is 2,3-diketo-L-gulonate reductase.